Here is a 271-residue protein sequence, read N- to C-terminus: N-acetyltransferase ECO1 (271 aa).

A CCHH-type zinc finger spans residues 26-50 (VKCPKCSITYSTNSPSDLVQHKRYH). Residues 109–271 (VMISPKKANE…SGKLLIPCYI (163 aa)) enclose the N-acetyltransferase domain.

It belongs to the acetyltransferase family. ECO subfamily.

It is found in the nucleus. In terms of biological role, probable acetyltransferase required for the establishment of sister chromatid cohesion and couple the processes of cohesion and DNA replication to ensure that only sister chromatids become paired together. In contrast to the structural cohesins, the deposition and establishment factors are required only during S phase. Acts by acetylating the cohesin complex component SMC3. This is N-acetyltransferase ECO1 (ECO1) from Kluyveromyces lactis (strain ATCC 8585 / CBS 2359 / DSM 70799 / NBRC 1267 / NRRL Y-1140 / WM37) (Yeast).